The chain runs to 635 residues: MINISFPDGSIKQFAKNITAYEVANAISMSLAKAAMVAEINGELQDLSIVIDNDCKLRILTAQDPECLEIIRHDAAHLTAEAVKELFPETQVTIGPAIENGYYYDFARDKPFTTDDLAVIEAKMQELSQKNEQVTRELWDRDKAVEFFKSIGEHYKAEIIASIPAGEPITLYRQGNFIDLCRGPHAPSTGVVKHFKLMKVAGAYWRGDSRNEMLQRIYGTAWATKEQLDSYLLMLEEAEKRDHRKLGRELDLFHFQEEAQGMVFWHDKGWSIYNTIEQYIRKKIRKNGYTEVKTPVLVDKSLWEASGHWEKFRDDMFALETDDKTLALKPMNCPCHVQIFKQGIKSYRDLPLRMSEFGLCHRNEASGALHGLMRVRSLVQDDAHIFCAAEQITDETVSFCKLLTEVYKDFGFTDIKVKFSDRPEIRAGSNEVWDKAENALKEAVEQAGFNYTLNPGEGAFYGPKLEFVLTDAIGRQWQCGTLQMDFVLPERLDASYVAASGEKKRPVMLHRAILGSLERFIGILIEEYAGRFPLWLAPVQVAIATITSDLNDYALEVQKALIDNGVRTDFNISPDKINYKIREFSNQKIPMIAVIGKQEQENKQVAIRRLGTTDQEVLSVEQLIAVVKEENEKYL.

The 61-residue stretch at 1-61 folds into the TGS domain; sequence MINISFPDGS…DNDCKLRILT (61 aa). The interval 242 to 533 is catalytic; that stretch reads DHRKLGRELD…LIEEYAGRFP (292 aa). Zn(2+) is bound by residues Cys333, His384, and His510.

This sequence belongs to the class-II aminoacyl-tRNA synthetase family. Homodimer. Requires Zn(2+) as cofactor.

Its subcellular location is the cytoplasm. The catalysed reaction is tRNA(Thr) + L-threonine + ATP = L-threonyl-tRNA(Thr) + AMP + diphosphate + H(+). Functionally, catalyzes the attachment of threonine to tRNA(Thr) in a two-step reaction: L-threonine is first activated by ATP to form Thr-AMP and then transferred to the acceptor end of tRNA(Thr). Also edits incorrectly charged L-seryl-tRNA(Thr). The chain is Threonine--tRNA ligase from Rickettsia conorii (strain ATCC VR-613 / Malish 7).